We begin with the raw amino-acid sequence, 219 residues long: ATP synthase protein MI25 (219 aa).

Residues 29–49 traverse the membrane as a helical segment; the sequence is ISIYNEEMIVARCFIGFLILS.

The protein belongs to the ATPase protein MI25 family. As to quaternary structure, F-type ATPases have 2 components, CF(1) - the catalytic core - and CF(0) - the membrane proton channel. CF(1) has five subunits: alpha(3), beta(3), gamma(1), delta(1), epsilon(1). CF(0) has three main subunits: a, b and c.

It localises to the mitochondrion membrane. In terms of biological role, this is one of the chains of the nonenzymatic component (CF(0) subunit) of the mitochondrial ATPase complex. In Zea mays (Maize), this protein is ATP synthase protein MI25.